The chain runs to 342 residues: ATP-dependent (S)-NAD(P)H-hydrate dehydratase (342 aa).

One can recognise a YjeF C-terminal domain in the interval 11–337 (ILPALEKVVP…EYLGHRLFTF (327 aa)). (6S)-NADPHX contacts are provided by residues G127 and 180–186 (NVMEHKR). ATP is bound by residues 229 to 233 (KGKTD) and 248 to 257 (GSPRRCGGQG). D258 is a (6S)-NADPHX binding site.

Belongs to the NnrD/CARKD family. Mg(2+) serves as cofactor.

The enzyme catalyses (6S)-NADHX + ATP = ADP + phosphate + NADH + H(+). It carries out the reaction (6S)-NADPHX + ATP = ADP + phosphate + NADPH + H(+). Functionally, catalyzes the dehydration of the S-form of NAD(P)HX at the expense of ATP, which is converted to ADP. Together with NAD(P)HX epimerase, which catalyzes the epimerization of the S- and R-forms, the enzyme allows the repair of both epimers of NAD(P)HX, a damaged form of NAD(P)H that is a result of enzymatic or heat-dependent hydration. This Physcomitrium patens (Spreading-leaved earth moss) protein is ATP-dependent (S)-NAD(P)H-hydrate dehydratase.